We begin with the raw amino-acid sequence, 1050 residues long: Probable efflux pump membrane transporter TtgB (1050 aa).

12 consecutive transmembrane segments (helical) span residues 10-30 (IFAWVIALVIMLVGALSILKL), 339-359 (GVIHTLIEAVVLVFLVMYLFL), 370-390 (MTVPVVLLGTFGILAAAGFSI), 393-413 (LTMFAMVLAIGLLVDDAIVVV), 440-460 (GALVGIALVLSAVLLPMAFFG), 472-492 (ITIVSAMGLSVLVALIFTPAL), 539-559 (VPFLLAYALIVVGMIWLFARI), 871-891 (MPALFALSVLFVFLCLAALYE), 893-913 (WSIPIAVVLVVPLGIIGALIA), 923-943 (VYFLVGLLTTIGLAAKNAILI), 972-992 (IIMTSLAFILGVVPLTIASGA), and 1004-1024 (VIGGMISATVLAIFWVPLFFV).

Belongs to the resistance-nodulation-cell division (RND) (TC 2.A.6) family.

It is found in the cell inner membrane. Probable membrane transporter component of the TtgABC efflux pump with unknown specificity. This is Probable efflux pump membrane transporter TtgB (ttgB) from Pseudomonas putida (strain ATCC 47054 / DSM 6125 / CFBP 8728 / NCIMB 11950 / KT2440).